Consider the following 502-residue polypeptide: Cytochrome P450 monooxygenase AacuE (502 aa).

A helical transmembrane segment spans residues Ala4–Pro26. The N-linked (GlcNAc...) asparagine glycan is linked to Asn393. Cys439 contributes to the heme binding site.

The protein belongs to the cytochrome P450 family. The cofactor is heme.

The protein localises to the membrane. It functions in the pathway secondary metabolite biosynthesis. In terms of biological role, cytochrome P450 monooxygenase; part of the gene cluster that mediates the biosynthesis of the tetrahydroxanthone dimer secalonic acid D. The pathway begins with the synthesis of atrochrysone thioester by the polyketide synthase AacuL. The atrochrysone carboxyl ACP thioesterase AacuM then breaks the thioester bond and releases the atrochrysone carboxylic acid from AacuL. Atrochrysone carboxylic acid is decarboxylated by the decarboxylase AacuI, and oxidized by the anthrone oxygenase AacuG to yield emodin. Emodin is then reduced to emodin hydroquinone by a yet unidentified oxidoreductase. A-ring reduction by the short chain dehydrogenase AacuN, dehydration by the scytalone dehydratase-like protein AacuK and probable spontaneous re-oxidation, results in overall deoxygenation to chrysophanol. Baeyer-Villiger oxidation by the Baeyer-Villiger monooxygenase (BVMO) AacuH then yields monodictyphenone. Monodictyphenone is transformed into compounds with the tetrahydroxanthone skeleton via methylesterification by the methyltransferase AacuQ, followed by the action of the flavin-dependent monooxygenase AacuC, the isomerase AacuP, and the short chain dehydrogenase/reductase AacuF or AacuD. AacuF and AacuD should accept the same compound as a substrate but perform the ketoreduction with a different stereoselectivity, thus yielding blennolides B and A, respectively. In the final step of the biosynthesis, the cytochrome P450 monooxygenase AacuE accepts blennolide B and/or blennolide A to conduct the dimerization reaction to furnish the tetrahydroxanthone dimers, secalonic acids D, B, and F. This is Cytochrome P450 monooxygenase AacuE from Aspergillus aculeatus (strain ATCC 16872 / CBS 172.66 / WB 5094).